A 293-amino-acid polypeptide reads, in one-letter code: Putative F-box/kelch-repeat protein At4g34170 (293 aa).

The F-box domain occupies 9–55 (VKTMLMLHDDLILNCLARVSRSNHPTLSLVCKRFHSLLASVELYQTR). 3 Kelch repeats span residues 94-140 (NIDA…TLDG), 141-187 (KIYV…ESVR), and 226-272 (SYCV…LADY).

This is Putative F-box/kelch-repeat protein At4g34170 from Arabidopsis thaliana (Mouse-ear cress).